A 604-amino-acid polypeptide reads, in one-letter code: Prostaglandin G/H synthase 2 (604 aa).

An N-terminal signal peptide occupies residues 1–17 (MLFRAVLLCAALGLSQA). The 38-residue stretch at 18-55 (ANPCCSNPCQNRGECMSTGFDQYKCDCTRTGFYGENCT) folds into the EGF-like domain. 4 disulfide bridges follow: Cys21-Cys32, Cys22-Cys145, Cys26-Cys42, and Cys44-Cys54. N-linked (GlcNAc...) asparagine glycosylation occurs at Asn53. Arg106 serves as a coordination point for substrate. Asn130 carries N-linked (GlcNAc...) asparagine glycosylation. His193 serves as the catalytic Proton acceptor. Position 341 (Tyr341) interacts with substrate. Residue Tyr371 is the For cyclooxygenase activity of the active site. His374 provides a ligand contact to heme b. Asn396 carries N-linked (GlcNAc...) asparagine glycosylation. The residue at position 526 (Cys526) is an S-nitrosocysteine. An intrachain disulfide couples Cys555 to Cys561. Position 565 is an O-acetylserine; by SPHK1 (Ser565). An N-linked (GlcNAc...) asparagine glycan is attached at Asn580.

This sequence belongs to the prostaglandin G/H synthase family. As to quaternary structure, homodimer. Requires heme b as cofactor. S-nitrosylation by NOS2 (iNOS) activates enzyme activity. S-nitrosylation may take place on different Cys residues in addition to Cys-526. Post-translationally, acetylated at Ser-565 by SPHK1. During neuroinflammation, acetylation by SPHK1 promotes neuronal secretion of specialized preresolving mediators (SPMs), especially 15-R-lipoxin A4, which results in an increase of phagocytic microglia. As to expression, following colon injury, expressed in the wound bed mesenchyme during the first phase of repair, probably by colonic mesenchymal stem cells (at protein level).

The protein resides in the microsome membrane. Its subcellular location is the endoplasmic reticulum membrane. The protein localises to the nucleus inner membrane. It is found in the nucleus outer membrane. The catalysed reaction is (5Z,8Z,11Z,14Z)-eicosatetraenoate + AH2 + 2 O2 = prostaglandin H2 + A + H2O. It catalyses the reaction (5Z,8Z,11Z,14Z)-eicosatetraenoate + 2 O2 = prostaglandin G2. It carries out the reaction prostaglandin G2 + AH2 = prostaglandin H2 + A + H2O. The enzyme catalyses (5Z,8Z,11Z,14Z,17Z)-eicosapentaenoate + 2 O2 = prostaglandin G3. The catalysed reaction is prostaglandin G3 + AH2 = prostaglandin H3 + A + H2O. It catalyses the reaction (8Z,11Z,14Z)-eicosatrienoate + 2 O2 = prostaglandin G1. It carries out the reaction prostaglandin G1 + AH2 = prostaglandin H1 + A + H2O. The enzyme catalyses 2-(5Z,8Z,11Z,14Z)-eicosatetraenoyl-sn-glycero-3-phosphoethanolamine + 2 O2 = 2-(prostaglandin G2)-sn-glycero-3-phosphoethanolamine. The catalysed reaction is 2-(prostaglandin G2)-sn-glycero-3-phosphoethanolamine + AH2 = 2-(prostaglandin H2)-sn-glycero-3-phosphoethanolamine + A + H2O. It catalyses the reaction 2-(5Z,8Z,11Z,14Z)-eicosatetraenoyl-sn-glycero-3-phosphocholine + 2 O2 = 2-(prostaglandin G2)-sn-glycero-3-phosphocholine. It carries out the reaction 2-(prostaglandin G2)-sn-glycero-3-phosphocholine + AH2 = 2-(prostaglandin H2)-sn-glycero-3-phosphocholine + A + H2O. The enzyme catalyses (15S)-hydroperoxy-(5Z,8Z,11Z,13E)-eicosatetraenoate + AH2 = (15S)-hydroxy-(5Z,8Z,11Z,13E)-eicosatetraenoate + A + H2O. The catalysed reaction is 2-(5Z,8Z,11Z,14Z)-eicosatetraenoyl-sn-glycero-3-phosphocholine + AH2 + O2 = 2-[(15S)-hydroxy-(5Z,8Z,11Z,13E)-eicosatetraenoyl]-sn-glycero-3-phosphocholine + A + H2O. It catalyses the reaction 2-(5Z,8Z,11Z,14Z)-eicosatetraenoyl-sn-glycero-3-phosphocholine + AH2 + O2 = 2-[(15R)-hydroxy-(5Z,8Z,11Z,13E)-eicosatetraenoyl]-sn-glycero-3-phosphocholine + A + H2O. It carries out the reaction 2-(5Z,8Z,11Z,14Z)-eicosatetraenoyl-sn-glycero-3-phosphocholine + AH2 + O2 = 2-[(11R)-hydroxy-(5Z,8Z,12E,14Z)-eicosatetraenoyl]-sn-glycero-3-phosphocholine + A + H2O. The enzyme catalyses (9Z,12Z)-octadecadienoate + AH2 + O2 = 9-hydroxy-(10E,12Z)-octadecadienoate + A + H2O. The catalysed reaction is (9Z,12Z)-octadecadienoate + AH2 + O2 = 13-hydroxy-(9Z,11E)-octadecadienoate + A + H2O. It catalyses the reaction (5Z,8Z,11Z,14Z)-eicosatetraenoate + AH2 + O2 = (15R)-hydroxy-(5Z,8Z,11Z,13E)-eicosatetraenoate + A + H2O. It carries out the reaction (5Z,8Z,11Z,14Z)-eicosatetraenoate + AH2 + O2 = (11R)-hydroxy-(5Z,8Z,12E,14Z)-eicosatetraenoate + A + H2O. The enzyme catalyses (5Z,8Z,11Z,14Z,17Z)-eicosapentaenoate + AH2 + O2 = (11R)-hydroxy-(5Z,8Z,12E,14Z,17Z)-eicosapentaenoate + A + H2O. The catalysed reaction is (5Z,8Z,11Z,14Z,17Z)-eicosapentaenoate + AH2 + O2 = (18S)-hydroxy-(5Z,8Z,11Z,14Z,16E)-eicosapentaenoate + A + H2O. It catalyses the reaction (5Z,8Z,11Z,14Z,17Z)-eicosapentaenoate + AH2 + O2 = (18R)-hydroxy-(5Z,8Z,11Z,14Z,16E)-eicosapentaenoate + A + H2O. It carries out the reaction (5Z,8Z,11Z,14Z,17Z)-eicosapentaenoate + AH2 + O2 = (15R)-hydroxy-(5Z,8Z,11Z,13E,17Z)-eicosapentaenoate + A + H2O. The enzyme catalyses (5Z,8Z,11Z,14Z,17Z)-eicosapentaenoate + AH2 + O2 = (15S)-hydroxy-(5Z,8Z,11Z,13E,17Z)-eicosapentaenoate + A + H2O. The catalysed reaction is (7Z,10Z,13Z,16Z,19Z)-docosapentaenoate + AH2 + O2 = 13R-hydroxy-(7Z,10Z,14E,16Z,19Z)-docosapentaenoate + A + H2O. It catalyses the reaction (4Z,7Z,10Z,13Z,16Z,19Z)-docosahexaenoate + AH2 + O2 = 13-hydroxy-(4Z,7Z,10Z,14E,16Z,19Z)-docosahexaenoate + A + H2O. It carries out the reaction (5S)-hydroxy-(6E,8Z,11Z,14Z)-eicosatetraenoate + AH2 + O2 = (5S,15R)-dihydroxy-(6E,8Z,11Z,13E)-eicosatetraenoate + A + H2O. The enzyme catalyses (4Z,7Z,10Z,13Z,16Z,19Z)-docosahexaenoate + AH2 + O2 = 17R-hydroxy-(4Z,7Z,10Z,13Z,15E,19Z)-docosahexaenoate + A + H2O. The catalysed reaction is (5S)-hydroxy-(6E,8Z,11Z,14Z)-eicosatetraenoate + AH2 + O2 = (5S,15S)-dihydroxy-(6E,8Z,11Z,13E)-eicosatetraenoate + A + H2O. It catalyses the reaction (5S)-hydroxy-(6E,8Z,11Z,14Z)-eicosatetraenoate + AH2 + O2 = (5S,11R)-dihydroxy-(6E,8Z,12E,14Z)-eicosatetraenoate + A + H2O. It carries out the reaction 2-(5Z,8Z,11Z,14Z-eicosatetraenoyl)-glycerol + 2 O2 = 2-glyceryl-prostaglandin G2. The enzyme catalyses 2-glyceryl-prostaglandin G2 + AH2 = 2-glyceryl-prostaglandin H2 + A + H2O. The catalysed reaction is (5Z,8Z,11Z,14Z)-eicosatetraenoate + O2 = (15R)-hydroperoxy-(5Z,8Z,11Z,13E)-eicosatetraenoate. It catalyses the reaction (5Z,8Z,11Z,14Z)-eicosatetraenoate + O2 = 11R-hydroperoxy-(5Z,8Z,12E,14Z)-eicosatetraenoate. It carries out the reaction (9Z,12Z)-octadecadienoate + AH2 + O2 = (9R)-hydroxy-(10E,12Z)-octadecadienoate + A + H2O. The enzyme catalyses (9Z,12Z)-octadecadienoate + AH2 + O2 = (9S)-hydroxy-(10E,12Z)-octadecadienoate + A + H2O. The catalysed reaction is (9Z,12Z)-octadecadienoate + AH2 + O2 = (13S)-hydroxy-(9Z,11E)-octadecadienoate + A + H2O. It catalyses the reaction (9Z,12Z)-octadecadienoate + AH2 + O2 = (13R)-hydroxy-(9Z,11E)-octadecadienoate + A + H2O. It participates in lipid metabolism; prostaglandin biosynthesis. Its activity is regulated as follows. Inhibited by the nonsteroidal anti-inflammatory drugs aspirin, naproxen, diclofenac, meclofenamic acid, indomethacin and their analogs. Its function is as follows. Dual cyclooxygenase and peroxidase in the biosynthesis pathway of prostanoids, a class of C20 oxylipins mainly derived from arachidonate, with a particular role in the inflammatory response. The cyclooxygenase activity oxygenates arachidonate (AA, C20:4(n-6)) to the hydroperoxy endoperoxide prostaglandin G2 (PGG2), and the peroxidase activity reduces PGG2 to the hydroxy endoperoxide PGH2, the precursor of all 2-series prostaglandins and thromboxanes. This complex transformation is initiated by abstraction of hydrogen at carbon 13 (with S-stereochemistry), followed by insertion of molecular O2 to form the endoperoxide bridge between carbon 9 and 11 that defines prostaglandins. The insertion of a second molecule of O2 (bis-oxygenase activity) yields a hydroperoxy group in PGG2 that is then reduced to PGH2 by two electrons. Similarly catalyzes successive cyclooxygenation and peroxidation of dihomo-gamma-linoleate (DGLA, C20:3(n-6)) and eicosapentaenoate (EPA, C20:5(n-3)) to corresponding PGH1 and PGH3, the precursors of 1- and 3-series prostaglandins. In an alternative pathway of prostanoid biosynthesis, converts 2-arachidonoyl lysophopholipids to prostanoid lysophopholipids, which are then hydrolyzed by intracellular phospholipases to release free prostanoids. Metabolizes 2-arachidonoyl glycerol yielding the glyceryl ester of PGH2, a process that can contribute to pain response. Generates lipid mediators from n-3 and n-6 polyunsaturated fatty acids (PUFAs) via a lipoxygenase-type mechanism. Oxygenates PUFAs to hydroperoxy compounds and then reduces them to corresponding alcohols. Plays a role in the generation of resolution phase interaction products (resolvins) during both sterile and infectious inflammation. Metabolizes docosahexaenoate (DHA, C22:6(n-3)) to 17R-HDHA, a precursor of the D-series resolvins (RvDs). As a component of the biosynthetic pathway of E-series resolvins (RvEs), converts eicosapentaenoate (EPA, C20:5(n-3)) primarily to 18S-HEPE that is further metabolized by ALOX5 and LTA4H to generate 18S-RvE1 and 18S-RvE2. In vascular endothelial cells, converts docosapentaenoate (DPA, C22:5(n-3)) to 13R-HDPA, a precursor for 13-series resolvins (RvTs) shown to activate macrophage phagocytosis during bacterial infection. In activated leukocytes, contributes to oxygenation of hydroxyeicosatetraenoates (HETE) to diHETES (5,15-diHETE and 5,11-diHETE). Can also use linoleate (LA, (9Z,12Z)-octadecadienoate, C18:2(n-6)) as substrate and produce hydroxyoctadecadienoates (HODEs) in a regio- and stereospecific manner, being (9R)-HODE ((9R)-hydroxy-(10E,12Z)-octadecadienoate) and (13S)-HODE ((13S)-hydroxy-(9Z,11E)-octadecadienoate) its major products. During neuroinflammation, plays a role in neuronal secretion of specialized preresolving mediators (SPMs) 15R-lipoxin A4 that regulates phagocytic microglia. The protein is Prostaglandin G/H synthase 2 of Mus musculus (Mouse).